Here is a 215-residue protein sequence, read N- to C-terminus: N-(5'-phosphoribosyl)anthranilate isomerase (215 aa).

The protein belongs to the TrpF family.

It catalyses the reaction N-(5-phospho-beta-D-ribosyl)anthranilate = 1-(2-carboxyphenylamino)-1-deoxy-D-ribulose 5-phosphate. It participates in amino-acid biosynthesis; L-tryptophan biosynthesis; L-tryptophan from chorismate: step 3/5. This is N-(5'-phosphoribosyl)anthranilate isomerase from Paracoccus denitrificans (strain Pd 1222).